The sequence spans 3330 residues: Laminin subunit alpha-3 (3330 aa).

The signal sequence occupies residues 1-31; the sequence is MAVALGRAPRSLPLLLTLLLLLLLRMSPSWS. Positions 40–295 constitute a Laminin N-terminal domain; the sequence is SSRSLHPPYF…SIKDISVGGR (256 aa). Asn-139 is a glycosylation site (N-linked (GlcNAc...) asparagine). The interval 295-725 is domain V; the sequence is RCVCNGHAEA…NNYYFPDLHH (431 aa). Cystine bridges form between Cys-296-Cys-305, Cys-298-Cys-316, Cys-318-Cys-327, Cys-330-Cys-350, Cys-353-Cys-362, Cys-355-Cys-387, Cys-390-Cys-399, Cys-402-Cys-420, Cys-423-Cys-433, Cys-425-Cys-440, Cys-442-Cys-451, Cys-454-Cys-464, Cys-488-Cys-500, Cys-490-Cys-506, Cys-508-Cys-517, Cys-520-Cys-530, Cys-533-Cys-545, Cys-535-Cys-552, Cys-554-Cys-563, Cys-566-Cys-583, Cys-628-Cys-642, Cys-630-Cys-649, Cys-651-Cys-660, Cys-663-Cys-678, Cys-681-Cys-693, Cys-683-Cys-700, and Cys-702-Cys-711. Laminin EGF-like domains follow at residues 296–350, 353–420, 423–464, 488–530, 533–576, 582–625, 628–678, and 681–725; these read CVCN…HNEC, CNCH…LHGC, CSCD…FPFC, CDCN…FPIC, CQCS…FPYC, VCHP…PRGC, CQCH…YFGC, and CQCD…DLHH. A glycan (N-linked (GlcNAc...) asparagine) is linked at Asn-445. Residues 793–1262 form a domain IV 1 (domain IV B) region; it reads TEAISGRITL…VAFYHNGAIP (470 aa). The tract at residues 1263–1462 is domain III B; that stretch reads CECDPAGTAG…CFCFGVNTDC (200 aa). 12 cysteine pairs are disulfide-bonded: Cys-1309/Cys-1316, Cys-1311/Cys-1323, Cys-1325/Cys-1334, Cys-1337/Cys-1350, Cys-1353/Cys-1368, Cys-1355/Cys-1375, Cys-1377/Cys-1386, Cys-1389/Cys-1399, Cys-1402/Cys-1414, Cys-1404/Cys-1421, Cys-1423/Cys-1432, and Cys-1435/Cys-1450. 3 Laminin EGF-like domains span residues 1309-1352, 1353-1401, and 1402-1452; these read CNCG…GCDV, CNCS…ECVP, and CSCN…GCTK. Asn-1354 carries N-linked (GlcNAc...) asparagine glycosylation. The 10-residue stretch at 1453-1462 folds into the Laminin EGF-like 12; first part domain; the sequence is CFCFGVNTDC. One can recognise a Laminin IV type A domain in the interval 1466-1650; the sequence is HKQRAKFVDM…SGPRAHLVEM (185 aa). The region spanning 1651–1683 is the Laminin EGF-like 12; second part domain; it reads CACPPDYTGDSCQGCRPGYYWDNKSLPVGRCVP. A domain III A region spans residues 1651 to 1818; that stretch reads CACPPDYTGD…DGSPAEECDD (168 aa). An N-linked (GlcNAc...) asparagine glycan is attached at Asn-1673. 8 disulfide bridges follow: Cys-1684–Cys-1693, Cys-1686–Cys-1700, Cys-1703–Cys-1712, Cys-1715–Cys-1728, Cys-1731–Cys-1743, Cys-1733–Cys-1752, Cys-1754–Cys-1763, and Cys-1766–Cys-1781. Laminin EGF-like domains follow at residues 1684 to 1730 and 1731 to 1783; these read CNCN…SCRV and CPCP…SCQP. The Laminin EGF-like 15; truncated domain occupies 1784-1818; that stretch reads CNCNSNGQLGPCDPLTGDCVNQEPKDGSPAEECDD. The domain II and I stretch occupies residues 1819–2385; sequence CDSCVMTLLN…ARDAANKVAI (567 aa). Coiled coils occupy residues 1851–1980, 2012–2057, 2088–2165, and 2211–2238; these read TGAL…LRSR, VENN…HENE, LLQT…GDEL, and KRAK…QQVS. Asn-2159 is a glycosylation site (N-linked (GlcNAc...) asparagine). A glycan (N-linked (GlcNAc...) asparagine) is linked at Asn-2261. The short motif at 2274–2276 is the Cell attachment site element; that stretch reads RGD. Positions 2318–2383 form a coiled coil; it reads SARREDFSKA…QQARDAANKV (66 aa). N-linked (GlcNAc...) asparagine glycans are attached at residues Asn-2332, Asn-2361, Asn-2498, Asn-2580, and Asn-2747. Laminin G-like domains lie at 2386-2587, 2594-2756, 2763-2923, 2983-3147, and 3154-3327; these read PMRF…VEPC, SDKN…TKKC, VRTA…LGGC, ALQF…VSPC, and KGIY…LNGC. Intrachain disulfides connect Cys-2557-Cys-2587, Cys-2733-Cys-2756, and Cys-2891-Cys-2923. Residue Asn-3094 is glycosylated (N-linked (GlcNAc...) asparagine). Cys-3124 and Cys-3147 are oxidised to a cystine. N-linked (GlcNAc...) asparagine glycosylation occurs at Asn-3270. Cys-3299 and Cys-3327 are disulfide-bonded.

Laminin is a complex glycoprotein, consisting of three different polypeptide chains (alpha, beta, gamma), which are bound to each other by disulfide bonds into a cross-shaped molecule comprising one long and three short arms with globules at each end. Alpha-3 is a subunit of laminin-5 (laminin-332 or epiligrin/kalinin/nicein), laminin-6 (laminin-311 or K-laminin) and laminin-7 (laminin-321 or KS-laminin). As to expression, basal membrane of the upper alimentary tract and urinary and nasal epithelia, salivary glands and teeth (both variants). Isoform A is predominantly expressed in skin, hair follicles and developing neurons of the trigeminal ganglion. Isoform B was found in bronchi, alveoli, stomach, intestinal crypts, whisker pads, CNS, telencephalic neuroectoderm, thalamus, Rathke pouch and periventricular subependymal germinal layer.

It localises to the secreted. It is found in the extracellular space. Its subcellular location is the extracellular matrix. The protein localises to the basement membrane. Functionally, binding to cells via a high affinity receptor, laminin is thought to mediate the attachment, migration and organization of cells into tissues during embryonic development by interacting with other extracellular matrix components. Its function is as follows. Laminin-5 is thought to be involved in (1) cell adhesion via integrin alpha-3/beta-1 in focal adhesion and integrin alpha-6/beta-4 in hemidesmosomes, (2) signal transduction via tyrosine phosphorylation of pp125-FAK and p80, (3) differentiation of keratinocytes. This is Laminin subunit alpha-3 (Lama3) from Mus musculus (Mouse).